Consider the following 428-residue polypeptide: Serine--tRNA ligase (428 aa).

Residue 231–233 (TAE) coordinates L-serine. Residue 262 to 264 (RSE) coordinates ATP. Glu285 lines the L-serine pocket. An ATP-binding site is contributed by 349–352 (EISS). Ser385 contacts L-serine.

It belongs to the class-II aminoacyl-tRNA synthetase family. Type-1 seryl-tRNA synthetase subfamily. In terms of assembly, homodimer. The tRNA molecule binds across the dimer.

It localises to the cytoplasm. The enzyme catalyses tRNA(Ser) + L-serine + ATP = L-seryl-tRNA(Ser) + AMP + diphosphate + H(+). It carries out the reaction tRNA(Sec) + L-serine + ATP = L-seryl-tRNA(Sec) + AMP + diphosphate + H(+). Its pathway is aminoacyl-tRNA biosynthesis; selenocysteinyl-tRNA(Sec) biosynthesis; L-seryl-tRNA(Sec) from L-serine and tRNA(Sec): step 1/1. Functionally, catalyzes the attachment of serine to tRNA(Ser). Is also able to aminoacylate tRNA(Sec) with serine, to form the misacylated tRNA L-seryl-tRNA(Sec), which will be further converted into selenocysteinyl-tRNA(Sec). The protein is Serine--tRNA ligase of Staphylococcus aureus (strain Mu3 / ATCC 700698).